The following is a 199-amino-acid chain: Recombination protein RecR (199 aa).

The C4-type zinc finger occupies 57-72 (CEICGNMDTENICRIC). One can recognise a Toprim domain in the interval 80 to 175 (SVIAIVETVA…KISRLASGIP (96 aa)).

This sequence belongs to the RecR family.

May play a role in DNA repair. It seems to be involved in an RecBC-independent recombinational process of DNA repair. It may act with RecF and RecO. The sequence is that of Recombination protein RecR from Rickettsia canadensis (strain McKiel).